Reading from the N-terminus, the 342-residue chain is Ribosomal RNA small subunit methyltransferase C (342 aa).

This sequence belongs to the methyltransferase superfamily. RsmC family. As to quaternary structure, monomer.

It is found in the cytoplasm. The enzyme catalyses guanosine(1207) in 16S rRNA + S-adenosyl-L-methionine = N(2)-methylguanosine(1207) in 16S rRNA + S-adenosyl-L-homocysteine + H(+). Its function is as follows. Specifically methylates the guanine in position 1207 of 16S rRNA in the 30S particle. The protein is Ribosomal RNA small subunit methyltransferase C of Erwinia tasmaniensis (strain DSM 17950 / CFBP 7177 / CIP 109463 / NCPPB 4357 / Et1/99).